A 143-amino-acid chain; its full sequence is Large ribosomal subunit protein uL11 (143 aa).

Belongs to the universal ribosomal protein uL11 family. In terms of assembly, part of the ribosomal stalk of the 50S ribosomal subunit. Interacts with L10 and the large rRNA to form the base of the stalk. L10 forms an elongated spine to which L12 dimers bind in a sequential fashion forming a multimeric L10(L12)X complex. In terms of processing, one or more lysine residues are methylated.

Functionally, forms part of the ribosomal stalk which helps the ribosome interact with GTP-bound translation factors. This is Large ribosomal subunit protein uL11 from Borrelia garinii subsp. bavariensis (strain ATCC BAA-2496 / DSM 23469 / PBi) (Borreliella bavariensis).